Consider the following 625-residue polypeptide: DNA-directed RNA polymerase subunit gamma (625 aa).

Zn(2+) is bound by residues C71, C73, C86, and C89. Mg(2+) contacts are provided by D467, D469, and D471.

Belongs to the RNA polymerase beta' chain family. RpoC1 subfamily. In cyanobacteria the RNAP catalytic core is composed of 2 alpha, 1 beta, 1 beta', 1 gamma and 1 omega subunit. When a sigma factor is associated with the core the holoenzyme is formed, which can initiate transcription. The cofactor is Mg(2+). It depends on Zn(2+) as a cofactor.

It carries out the reaction RNA(n) + a ribonucleoside 5'-triphosphate = RNA(n+1) + diphosphate. In terms of biological role, DNA-dependent RNA polymerase catalyzes the transcription of DNA into RNA using the four ribonucleoside triphosphates as substrates. This Gloeothece citriformis (strain PCC 7424) (Cyanothece sp. (strain PCC 7424)) protein is DNA-directed RNA polymerase subunit gamma.